The sequence spans 24 residues: VGGLIAYDNIEISQIPVGDGVTLC.

This sequence belongs to the class I-like SAM-binding methyltransferase superfamily. Cation-dependent O-methyltransferase family. CCoAMT subfamily. It depends on a divalent metal cation as a cofactor.

The catalysed reaction is (E)-caffeoyl-CoA + S-adenosyl-L-methionine = (E)-feruloyl-CoA + S-adenosyl-L-homocysteine + H(+). The protein operates within aromatic compound metabolism; phenylpropanoid biosynthesis. Methylates caffeoyl-CoA to feruloyl-CoA and 5-hydroxyferuloyl-CoA to sinapoyl-CoA. Plays a role in the synthesis of feruloylated polysaccharides. Involved in the reinforcement of the plant cell wall. Also involved in the responding to wounding or pathogen challenge by the increased formation of cell wall-bound ferulic acid polymers. This Pinus pinaster (Maritime pine) protein is Probable caffeoyl-CoA O-methyltransferase.